Here is a 662-residue protein sequence, read N- to C-terminus: Acetyl-coenzyme A synthetase (662 aa).

Residues 197 to 200 and T317 each bind CoA; that span reads RKGK. Residues 393–395, 417–422, D510, and R525 each bind ATP; these read GEP and DTWWQT. S533 lines the CoA pocket. Residue R536 coordinates ATP. Mg(2+) contacts are provided by H549 and V552. At K623 the chain carries N6-acetyllysine.

This sequence belongs to the ATP-dependent AMP-binding enzyme family. It depends on Mg(2+) as a cofactor. Acetylated. Deacetylation by the SIR2-homolog deacetylase activates the enzyme.

The catalysed reaction is acetate + ATP + CoA = acetyl-CoA + AMP + diphosphate. Catalyzes the conversion of acetate into acetyl-CoA (AcCoA), an essential intermediate at the junction of anabolic and catabolic pathways. AcsA undergoes a two-step reaction. In the first half reaction, AcsA combines acetate with ATP to form acetyl-adenylate (AcAMP) intermediate. In the second half reaction, it can then transfer the acetyl group from AcAMP to the sulfhydryl group of CoA, forming the product AcCoA. This chain is Acetyl-coenzyme A synthetase, found in Helicobacter acinonychis (strain Sheeba).